Consider the following 239-residue polypeptide: Probable transcriptional regulatory protein BPUM_0743 (239 aa).

Belongs to the TACO1 family. YeeN subfamily.

It is found in the cytoplasm. This is Probable transcriptional regulatory protein BPUM_0743 from Bacillus pumilus (strain SAFR-032).